A 204-amino-acid chain; its full sequence is Thiamine-phosphate synthase (204 aa).

Residues 37–41 and Asn69 contribute to the 4-amino-2-methyl-5-(diphosphooxymethyl)pyrimidine site; that span reads QVREK. Mg(2+) contacts are provided by Asp70 and Asp89. Ser108 provides a ligand contact to 4-amino-2-methyl-5-(diphosphooxymethyl)pyrimidine. 134–136 is a 2-[(2R,5Z)-2-carboxy-4-methylthiazol-5(2H)-ylidene]ethyl phosphate binding site; sequence TGT. Residue Lys137 coordinates 4-amino-2-methyl-5-(diphosphooxymethyl)pyrimidine. Residues Gly165 and 185–186 contribute to the 2-[(2R,5Z)-2-carboxy-4-methylthiazol-5(2H)-ylidene]ethyl phosphate site; that span reads IS.

The protein belongs to the thiamine-phosphate synthase family. Mg(2+) serves as cofactor.

It catalyses the reaction 2-[(2R,5Z)-2-carboxy-4-methylthiazol-5(2H)-ylidene]ethyl phosphate + 4-amino-2-methyl-5-(diphosphooxymethyl)pyrimidine + 2 H(+) = thiamine phosphate + CO2 + diphosphate. The catalysed reaction is 2-(2-carboxy-4-methylthiazol-5-yl)ethyl phosphate + 4-amino-2-methyl-5-(diphosphooxymethyl)pyrimidine + 2 H(+) = thiamine phosphate + CO2 + diphosphate. The enzyme catalyses 4-methyl-5-(2-phosphooxyethyl)-thiazole + 4-amino-2-methyl-5-(diphosphooxymethyl)pyrimidine + H(+) = thiamine phosphate + diphosphate. The protein operates within cofactor biosynthesis; thiamine diphosphate biosynthesis; thiamine phosphate from 4-amino-2-methyl-5-diphosphomethylpyrimidine and 4-methyl-5-(2-phosphoethyl)-thiazole: step 1/1. Condenses 4-methyl-5-(beta-hydroxyethyl)thiazole monophosphate (THZ-P) and 2-methyl-4-amino-5-hydroxymethyl pyrimidine pyrophosphate (HMP-PP) to form thiamine monophosphate (TMP). This chain is Thiamine-phosphate synthase, found in Clostridium novyi (strain NT).